We begin with the raw amino-acid sequence, 254 residues long: Flavin-dependent thymidylate synthase (254 aa).

The ThyX domain maps to 7-237 (LRVQLIARTE…PAVFADFEIY (231 aa)). FAD is bound by residues S71, 95-97 (RHR), and Q103. DUMP contacts are provided by residues 92–95 (ELIR), 103–107 (QLSQR), and R176. The short motif at 95–105 (RHRHFSYSQLS) is the ThyX motif element. FAD is bound by residues 192–194 (NYR) and H198. R203 is a binding site for dUMP. The active-site Involved in ionization of N3 of dUMP, leading to its activation is the R203.

It belongs to the thymidylate synthase ThyX family. Homotetramer. FAD serves as cofactor.

The enzyme catalyses dUMP + (6R)-5,10-methylene-5,6,7,8-tetrahydrofolate + NADPH + H(+) = dTMP + (6S)-5,6,7,8-tetrahydrofolate + NADP(+). Its pathway is pyrimidine metabolism; dTTP biosynthesis. Functionally, catalyzes the reductive methylation of 2'-deoxyuridine-5'-monophosphate (dUMP) to 2'-deoxythymidine-5'-monophosphate (dTMP) while utilizing 5,10-methylenetetrahydrofolate (mTHF) as the methyl donor, and NADPH and FADH(2) as the reductant. The chain is Flavin-dependent thymidylate synthase from Mycobacterium sp. (strain JLS).